Reading from the N-terminus, the 404-residue chain is Sulfate adenylyltransferase (404 aa).

It belongs to the sulfate adenylyltransferase family.

The enzyme catalyses sulfate + ATP + H(+) = adenosine 5'-phosphosulfate + diphosphate. The protein operates within sulfur metabolism; hydrogen sulfide biosynthesis; sulfite from sulfate: step 1/3. This chain is Sulfate adenylyltransferase, found in Chlorobaculum tepidum (strain ATCC 49652 / DSM 12025 / NBRC 103806 / TLS) (Chlorobium tepidum).